The following is a 91-amino-acid chain: uncharacterized protein (91 aa).

This is an uncharacterized protein from Kluyveromyces lactis (strain ATCC 8585 / CBS 2359 / DSM 70799 / NBRC 1267 / NRRL Y-1140 / WM37) (Yeast).